Consider the following 430-residue polypeptide: Lipoyl synthase, mitochondrial (430 aa).

The N-terminal 37 residues, 1 to 37 (MAASTGKLRTLFSAHSSLSARPSSALPALRLTILRSY), are a transit peptide targeting the mitochondrion. Positions 40–56 (TTPPDSSISDPSNSSTT) are enriched in low complexity. A disordered region spans residues 40–63 (TTPPDSSISDPSNSSTTVKRPPTA). [4Fe-4S] cluster-binding residues include cysteine 141, cysteine 146, cysteine 152, cysteine 172, cysteine 176, cysteine 179, and serine 387. The 222-residue stretch at 155 to 376 (GSSKSAATAT…KERALEMGFL (222 aa)) folds into the Radical SAM core domain.

Belongs to the radical SAM superfamily. Lipoyl synthase family. [4Fe-4S] cluster is required as a cofactor.

It is found in the mitochondrion. It carries out the reaction [[Fe-S] cluster scaffold protein carrying a second [4Fe-4S](2+) cluster] + N(6)-octanoyl-L-lysyl-[protein] + 2 oxidized [2Fe-2S]-[ferredoxin] + 2 S-adenosyl-L-methionine + 4 H(+) = [[Fe-S] cluster scaffold protein] + N(6)-[(R)-dihydrolipoyl]-L-lysyl-[protein] + 4 Fe(3+) + 2 hydrogen sulfide + 2 5'-deoxyadenosine + 2 L-methionine + 2 reduced [2Fe-2S]-[ferredoxin]. It participates in protein modification; protein lipoylation via endogenous pathway; protein N(6)-(lipoyl)lysine from octanoyl-[acyl-carrier-protein]: step 2/2. Catalyzes the radical-mediated insertion of two sulfur atoms into the C-6 and C-8 positions of the octanoyl moiety bound to the lipoyl domains of lipoate-dependent enzymes, thereby converting the octanoylated domains into lipoylated derivatives. In Ajellomyces dermatitidis (strain ER-3 / ATCC MYA-2586) (Blastomyces dermatitidis), this protein is Lipoyl synthase, mitochondrial.